We begin with the raw amino-acid sequence, 420 residues long: Tyrosine--tRNA ligase (420 aa).

Tyr33 serves as a coordination point for L-tyrosine. Positions 38–47 (PTADSLHIGH) match the 'HIGH' region motif. Residues Tyr168 and Gln172 each coordinate L-tyrosine. Positions 231–235 (KFGKT) match the 'KMSKS' region motif. Lys234 is an ATP binding site. Residues 353–419 (MLLVDALIKV…GKKNYYLVKL (67 aa)) enclose the S4 RNA-binding domain.

It belongs to the class-I aminoacyl-tRNA synthetase family. TyrS type 1 subfamily. Homodimer.

It is found in the cytoplasm. The enzyme catalyses tRNA(Tyr) + L-tyrosine + ATP = L-tyrosyl-tRNA(Tyr) + AMP + diphosphate + H(+). Catalyzes the attachment of tyrosine to tRNA(Tyr) in a two-step reaction: tyrosine is first activated by ATP to form Tyr-AMP and then transferred to the acceptor end of tRNA(Tyr). In Desulfitobacterium hafniense (strain DSM 10664 / DCB-2), this protein is Tyrosine--tRNA ligase.